The primary structure comprises 925 residues: Protein translocase subunit SecA (925 aa).

ATP contacts are provided by residues Gln87, 105-109 (GEGKT), and Asp531. The segment at 867–909 (AAGADMRFQHSQPESVLHKPEAGEGEEAQPFRRETPKVGRNDP) is disordered. The span at 895-906 (QPFRRETPKVGR) shows a compositional bias: basic and acidic residues. Zn(2+) contacts are provided by Cys910, Cys912, Cys921, and His922.

This sequence belongs to the SecA family. In terms of assembly, monomer and homodimer. Part of the essential Sec protein translocation apparatus which comprises SecA, SecYEG and auxiliary proteins SecDF-YajC and YidC. The cofactor is Zn(2+).

The protein resides in the cell inner membrane. It is found in the cytoplasm. It catalyses the reaction ATP + H2O + cellular proteinSide 1 = ADP + phosphate + cellular proteinSide 2.. Part of the Sec protein translocase complex. Interacts with the SecYEG preprotein conducting channel. Has a central role in coupling the hydrolysis of ATP to the transfer of proteins into and across the cell membrane, serving both as a receptor for the preprotein-SecB complex and as an ATP-driven molecular motor driving the stepwise translocation of polypeptide chains across the membrane. This is Protein translocase subunit SecA from Thioalkalivibrio sulfidiphilus (strain HL-EbGR7).